The primary structure comprises 139 residues: uncharacterized protein (139 aa).

The Globin domain occupies 1 to 133; it reads MLSEETIRVI…LAKTLITLEK (133 aa).

This sequence belongs to the globin family.

This is an uncharacterized protein from Aquifex aeolicus (strain VF5).